The sequence spans 141 residues: Cystatin (141 aa).

Positions 1–26 (MVHFQLPVAAPLCLLCALLLLPSATM) are cleaved as a signal peptide. Residues 29-129 (GGLSPRSVSD…CHFQVWSRPW (101 aa)) form the Cystatin domain. The Secondary area of contact motif lies at 73–77 (QVVAG). 2 disulfide bridges follow: Cys-91/Cys-107 and Cys-120/Cys-140.

This sequence belongs to the cystatin family. As to expression, expressed at a low level by the venom gland (at protein level).

Its subcellular location is the secreted. Inhibits various C1 cysteine proteases including cathepsin L, papain and cathepsin B. This protein has no toxic activity and its function in the venom is unknown. It may play a role as a housekeeping or regulatory protein. The polypeptide is Cystatin (Naja kaouthia (Monocled cobra)).